Consider the following 105-residue polypeptide: DNA-directed RNA polymerase subunit omega (105 aa).

It belongs to the RNA polymerase subunit omega family. In terms of assembly, the RNAP catalytic core consists of 2 alpha, 1 beta, 1 beta' and 1 omega subunit. When a sigma factor is associated with the core the holoenzyme is formed, which can initiate transcription.

It catalyses the reaction RNA(n) + a ribonucleoside 5'-triphosphate = RNA(n+1) + diphosphate. In terms of biological role, promotes RNA polymerase assembly. Latches the N- and C-terminal regions of the beta' subunit thereby facilitating its interaction with the beta and alpha subunits. The polypeptide is DNA-directed RNA polymerase subunit omega (Streptococcus pyogenes serotype M12 (strain MGAS2096)).